Consider the following 443-residue polypeptide: Oxygen-dependent coproporphyrinogen-III oxidase, mitochondrial (443 aa).

The N-terminal 98 residues, 1-98 (MALRLGRLGS…EMVPKSSGAR (98 aa)), are a transit peptide targeting the mitochondrion. Residues 89-112 (EMVPKSSGARSPSPGRREEDGDEL) form a disordered region. Ser-101 bears the Phosphoserine mark. A compositionally biased stretch (basic and acidic residues) spans 103–112 (GRREEDGDEL). Residues 182–191 (VLQDGRVFEK) form an important for dimerization region. Ser-233 is a coproporphyrinogen III binding site. His-247 (proton donor) is an active-site residue. A coproporphyrinogen III-binding site is contributed by 249–251 (NYR). The segment at 381 to 417 (YVEFNLLYDRGTKFGLFTPGSRIESILMSLPLTARWE) is important for dimerization. N6-acetyllysine; alternate is present on Lys-393. Lys-393 bears the N6-succinyllysine; alternate mark. A coproporphyrinogen III-binding site is contributed by 400–402 (GSR).

Belongs to the aerobic coproporphyrinogen-III oxidase family. Homodimer. As to expression, expressed in erythroid cells. Expressed in liver.

It is found in the mitochondrion intermembrane space. It carries out the reaction coproporphyrinogen III + O2 + 2 H(+) = protoporphyrinogen IX + 2 CO2 + 2 H2O. It participates in porphyrin-containing compound metabolism; protoporphyrin-IX biosynthesis; protoporphyrinogen-IX from coproporphyrinogen-III (O2 route): step 1/1. Its function is as follows. Involved in the heme biosynthesis. Catalyzes the aerobic oxidative decarboxylation of propionate groups of rings A and B of coproporphyrinogen-III to yield the vinyl groups in protoporphyrinogen-IX. The protein is Oxygen-dependent coproporphyrinogen-III oxidase, mitochondrial (Cpox) of Mus musculus (Mouse).